A 477-amino-acid chain; its full sequence is Protein RdxB (477 aa).

Residues 1-29 (MTSPDTQTSSLYAKREPVFPKRVSGKFRS) lie on the Cytoplasmic side of the membrane. Residues 30-50 (LKWWIMGVTLGIYYIAPWLRW) traverse the membrane as a helical segment. Over 51–81 (DRGPNLPDQAILVDLANRRFFFFMIEIWPHE) the chain is Periplasmic. A helical membrane pass occupies residues 82-102 (FYFVAGLLIMAGLGLFLFTSA). Topologically, residues 103-154 (AGRVWCGYACPQTVWTDLFILVERWVEGDRNARIRLLRQRWDLEKTRKYLTK) are cytoplasmic. Residues 155–175 (WTLWLLIGLATGGAWVFYFTD) form a helical membrane-spanning segment. The Periplasmic portion of the chain corresponds to 176–189 (APTLLVDLLTGNAH). A helical membrane pass occupies residues 190–210 (PVAYITMATLTATTFAFGGFA). Topologically, residues 211-338 (REQICIYACP…SAWRHVFRLR (128 aa)) are cytoplasmic. In terms of domain architecture, 4Fe-4S ferredoxin-type spans 253 to 281 (EPLSPDQGDCIDCMACVNVCPMGIDIRDG). [4Fe-4S] cluster contacts are provided by Cys-262, Cys-265, Cys-268, Cys-272, Cys-286, Cys-289, Cys-292, and Cys-296. The chain crosses the membrane as a helical span at residues 339–359 (TLIYTALWSGVGLALIVALFL). The Periplasmic portion of the chain corresponds to 360–477 (RSPIDINVTP…HDTIFNGRGN (118 aa)).

[4Fe-4S] cluster serves as cofactor.

The protein localises to the cell membrane. Involved in a membrane generated redox signal; required to maintain repression of photosynthesis gene expression in the presence of oxygen. The protein is Protein RdxB (rdxB) of Cereibacter sphaeroides (strain ATCC 17023 / DSM 158 / JCM 6121 / CCUG 31486 / LMG 2827 / NBRC 12203 / NCIMB 8253 / ATH 2.4.1.) (Rhodobacter sphaeroides).